Here is a 712-residue protein sequence, read N- to C-terminus: Polyribonucleotide nucleotidyltransferase (712 aa).

2 residues coordinate Mg(2+): D493 and D499. The KH domain occupies 560–622 (PRLTKLTIDP…RDAEAAIERI (63 aa)). The S1 motif domain occupies 632–700 (GEDYVGTVKG…DDGKMRLTRK (69 aa)).

It belongs to the polyribonucleotide nucleotidyltransferase family. Mg(2+) serves as cofactor.

The protein resides in the cytoplasm. The enzyme catalyses RNA(n+1) + phosphate = RNA(n) + a ribonucleoside 5'-diphosphate. Its function is as follows. Involved in mRNA degradation. Catalyzes the phosphorolysis of single-stranded polyribonucleotides processively in the 3'- to 5'-direction. The protein is Polyribonucleotide nucleotidyltransferase of Salinibacter ruber (strain DSM 13855 / M31).